Reading from the N-terminus, the 1063-residue chain is Error-prone DNA polymerase (1063 aa).

Belongs to the DNA polymerase type-C family. DnaE2 subfamily.

It localises to the cytoplasm. The catalysed reaction is DNA(n) + a 2'-deoxyribonucleoside 5'-triphosphate = DNA(n+1) + diphosphate. In terms of biological role, DNA polymerase involved in damage-induced mutagenesis and translesion synthesis (TLS). It is not the major replicative DNA polymerase. The chain is Error-prone DNA polymerase from Burkholderia mallei (strain ATCC 23344).